The following is a 274-amino-acid chain: Rhamnulose-1-phosphate aldolase (274 aa).

Residue Glu117 is part of the active site. The Zn(2+) site is built by His141, His143, and His212.

It belongs to the aldolase class II family. RhaD subfamily. Homotetramer. Zn(2+) serves as cofactor.

It localises to the cytoplasm. The enzyme catalyses L-rhamnulose 1-phosphate = (S)-lactaldehyde + dihydroxyacetone phosphate. The protein operates within carbohydrate degradation; L-rhamnose degradation; glycerone phosphate from L-rhamnose: step 3/3. Catalyzes the reversible cleavage of L-rhamnulose-1-phosphate to dihydroxyacetone phosphate (DHAP) and L-lactaldehyde. This is Rhamnulose-1-phosphate aldolase from Shigella dysenteriae serotype 1 (strain Sd197).